The following is a 167-amino-acid chain: Phosphopantetheine adenylyltransferase (167 aa).

Serine 11 contacts substrate. ATP contacts are provided by residues 11–12 (SF) and histidine 19. 3 residues coordinate substrate: lysine 43, threonine 76, and arginine 90. ATP-binding positions include 91-93 (GIR), glutamate 101, and 126-132 (YDALSST).

The protein belongs to the bacterial CoaD family. Homohexamer. Requires Mg(2+) as cofactor.

The protein resides in the cytoplasm. It catalyses the reaction (R)-4'-phosphopantetheine + ATP + H(+) = 3'-dephospho-CoA + diphosphate. The protein operates within cofactor biosynthesis; coenzyme A biosynthesis; CoA from (R)-pantothenate: step 4/5. Its function is as follows. Reversibly transfers an adenylyl group from ATP to 4'-phosphopantetheine, yielding dephospho-CoA (dPCoA) and pyrophosphate. This Lacticaseibacillus paracasei (strain ATCC 334 / BCRC 17002 / CCUG 31169 / CIP 107868 / KCTC 3260 / NRRL B-441) (Lactobacillus paracasei) protein is Phosphopantetheine adenylyltransferase.